Consider the following 304-residue polypeptide: N-acetylmuramic acid 6-phosphate etherase (304 aa).

Residues 58–221 enclose the SIS domain; it reads IVDRMKQGGR…TTASMVKMGK (164 aa). E86 (proton donor) is an active-site residue. Residue E117 is part of the active site.

The protein belongs to the GCKR-like family. MurNAc-6-P etherase subfamily. As to quaternary structure, homodimer.

It catalyses the reaction N-acetyl-D-muramate 6-phosphate + H2O = N-acetyl-D-glucosamine 6-phosphate + (R)-lactate. It participates in amino-sugar metabolism; N-acetylmuramate degradation. In terms of biological role, specifically catalyzes the cleavage of the D-lactyl ether substituent of MurNAc 6-phosphate, producing GlcNAc 6-phosphate and D-lactate. This chain is N-acetylmuramic acid 6-phosphate etherase, found in Clostridioides difficile (strain 630) (Peptoclostridium difficile).